Reading from the N-terminus, the 77-residue chain is RNA-binding protein Hfq (77 aa).

One can recognise a Sm domain in the interval 10-70 (DIFLNSARKN…ITTVTPEKPI (61 aa)).

Belongs to the Hfq family. Homohexamer.

RNA chaperone that binds small regulatory RNA (sRNAs) and mRNAs to facilitate mRNA translational regulation in response to envelope stress, environmental stress and changes in metabolite concentrations. Also binds with high specificity to tRNAs. The polypeptide is RNA-binding protein Hfq (Clostridium botulinum (strain Eklund 17B / Type B)).